A 558-amino-acid polypeptide reads, in one-letter code: NAD(P)H-quinone oxidoreductase chain 4 (558 aa).

15 consecutive transmembrane segments (helical) span residues 25-45 (FPWL…VPFV), 56-76 (WFAL…YLTG), 90-110 (VSWL…LSMP), 111-131 (LILL…PVTF), 133-153 (PKLF…VFAV), 157-177 (LLFF…LAIW), 189-209 (FILY…AMGF), 230-250 (GFEL…LPIV), 264-284 (TAPV…YALM), 298-318 (FAPL…LTSF), 327-347 (IAYS…SFSE), 353-373 (AMLQ…LVGA), 397-417 (FALW…SGFV), 438-458 (IVID…LLSM), and 485-505 (VYII…PKLM).

Belongs to the complex I subunit 4 family.

It localises to the cellular thylakoid membrane. The enzyme catalyses a plastoquinone + NADH + (n+1) H(+)(in) = a plastoquinol + NAD(+) + n H(+)(out). It carries out the reaction a plastoquinone + NADPH + (n+1) H(+)(in) = a plastoquinol + NADP(+) + n H(+)(out). NDH-1 shuttles electrons from NAD(P)H, via FMN and iron-sulfur (Fe-S) centers, to quinones in the respiratory chain. The immediate electron acceptor for the enzyme in this species is believed to be plastoquinone. Couples the redox reaction to proton translocation (for every two electrons transferred, four hydrogen ions are translocated across the cytoplasmic membrane), and thus conserves the redox energy in a proton gradient. This is NAD(P)H-quinone oxidoreductase chain 4 from Synechococcus sp. (strain CC9311).